A 189-amino-acid polypeptide reads, in one-letter code: Elongation factor P (189 aa).

This sequence belongs to the elongation factor P family.

Its subcellular location is the cytoplasm. It participates in protein biosynthesis; polypeptide chain elongation. Functionally, involved in peptide bond synthesis. Stimulates efficient translation and peptide-bond synthesis on native or reconstituted 70S ribosomes in vitro. Probably functions indirectly by altering the affinity of the ribosome for aminoacyl-tRNA, thus increasing their reactivity as acceptors for peptidyl transferase. The polypeptide is Elongation factor P (Rhizobium etli (strain ATCC 51251 / DSM 11541 / JCM 21823 / NBRC 15573 / CFN 42)).